A 166-amino-acid chain; its full sequence is Ribosome-binding factor A (166 aa).

Positions 122-166 (LASTAEHAGDADPYRVDTEDDDDDTDGADAEARSDADVRRGPQSG) are disordered. Residues 128–138 (HAGDADPYRVD) are compositionally biased toward basic and acidic residues. A compositionally biased stretch (acidic residues) spans 139 to 150 (TEDDDDDTDGAD). Residues 151–166 (AEARSDADVRRGPQSG) are compositionally biased toward basic and acidic residues.

The protein belongs to the RbfA family. In terms of assembly, monomer. Binds 30S ribosomal subunits, but not 50S ribosomal subunits or 70S ribosomes.

Its subcellular location is the cytoplasm. Functionally, one of several proteins that assist in the late maturation steps of the functional core of the 30S ribosomal subunit. Associates with free 30S ribosomal subunits (but not with 30S subunits that are part of 70S ribosomes or polysomes). Required for efficient processing of 16S rRNA. May interact with the 5'-terminal helix region of 16S rRNA. This Saccharopolyspora erythraea (strain ATCC 11635 / DSM 40517 / JCM 4748 / NBRC 13426 / NCIMB 8594 / NRRL 2338) protein is Ribosome-binding factor A.